Reading from the N-terminus, the 438-residue chain is MLKIYNSLTRKKEFFNPAHPPQINMYVCGPTVYNHLHLGNTRPLIFFDTVKRYLEMLNFRVYYVVNITDIDDKIIENALKNQVLEQDLANKYIKSFNNLLKTLNIQTINFKPQATQYINSMIVYIQTLLDQGFAYFTDQGIYFRVSKIDDYGKLKKQDLSQLKQNARKQLDPQKEFPGDFILWKKTSQGITYPSPWFAGRPGWHTECATMIEQLFKLPLDIHGGGTDLKFPHHENEIAQTHAHSHQKLANFFMHVERLDYQNQKMSKSLGNIIWCKDLLKQYNPCIIKLLILSTHYRKPINFSYDLMEQAQQKYQKITDFLTKNNFYLKVNQFSCQALDQDIMQLFHQLMQDDLATHKVIDLMEQTIKQAHQTQILDKLSQFQNSLLLILNILGITIPFNKPTKTDLQTYFLWQDARKYRDFAQADILRKQLLDKGFI.

Cysteine 28 serves as a coordination point for Zn(2+). Positions 30–40 (PTVYNHLHLGN) match the 'HIGH' region motif. The Zn(2+) site is built by cysteine 207, histidine 232, and glutamate 236. The 'KMSKS' region motif lies at 264-268 (KMSKS). ATP is bound at residue lysine 267.

This sequence belongs to the class-I aminoacyl-tRNA synthetase family. As to quaternary structure, monomer. Requires Zn(2+) as cofactor.

The protein localises to the cytoplasm. The catalysed reaction is tRNA(Cys) + L-cysteine + ATP = L-cysteinyl-tRNA(Cys) + AMP + diphosphate. The chain is Cysteine--tRNA ligase from Onion yellows phytoplasma (strain OY-M).